Consider the following 429-residue polypeptide: DNA dC-&gt;dU-editing enzyme APOBEC3 (429 aa).

2 CMP/dCMP-type deaminase domains span residues 38–154 and 238–357; these read DRKD…AQVA and EEEF…LCSL. His-71 is a Zn(2+) binding site. Residue Glu-73 is the Proton donor of the active site. Residues Cys-105, Cys-108, His-288, Cys-316, and Cys-319 each coordinate Zn(2+).

This sequence belongs to the cytidine and deoxycytidylate deaminase family. In terms of assembly, homodimer. Zn(2+) serves as cofactor.

The protein localises to the cytoplasm. The enzyme catalyses a 2'-deoxycytidine in single-stranded DNA + H2O + H(+) = a 2'-deoxyuridine in single-stranded DNA + NH4(+). Functionally, DNA deaminase (cytidine deaminase) which acts as an inhibitor of retrovirus replication and retrotransposon mobility via deaminase-dependent and -independent mechanisms. Selectively targets single-stranded DNA and does not deaminate double-stranded DNA or single- or double-stranded RNA. This is DNA dC-&gt;dU-editing enzyme APOBEC3 (Apobec3) from Rattus norvegicus (Rat).